We begin with the raw amino-acid sequence, 287 residues long: NAD kinase (287 aa).

The active-site Proton acceptor is aspartate 66. Residues 66–67 (DG), 137–138 (ND), arginine 148, arginine 165, aspartate 167, and 178–183 (TAYSMS) each bind NAD(+).

Belongs to the NAD kinase family. A divalent metal cation serves as cofactor.

The protein resides in the cytoplasm. The enzyme catalyses NAD(+) + ATP = ADP + NADP(+) + H(+). Functionally, involved in the regulation of the intracellular balance of NAD and NADP, and is a key enzyme in the biosynthesis of NADP. Catalyzes specifically the phosphorylation on 2'-hydroxyl of the adenosine moiety of NAD to yield NADP. The protein is NAD kinase of Chlorobium limicola (strain DSM 245 / NBRC 103803 / 6330).